We begin with the raw amino-acid sequence, 141 residues long: Large ribosomal subunit protein uL11 (141 aa).

The protein belongs to the universal ribosomal protein uL11 family. Part of the ribosomal stalk of the 50S ribosomal subunit. Interacts with L10 and the large rRNA to form the base of the stalk. L10 forms an elongated spine to which L12 dimers bind in a sequential fashion forming a multimeric L10(L12)X complex. Post-translationally, one or more lysine residues are methylated.

In terms of biological role, forms part of the ribosomal stalk which helps the ribosome interact with GTP-bound translation factors. This is Large ribosomal subunit protein uL11 from Prochlorococcus marinus (strain MIT 9211).